The primary structure comprises 463 residues: Hexokinase-7 (463 aa).

Residues 7-456 (AAAEQVVAAL…SGLGAALIAA (450 aa)) enclose the Hexokinase domain. A hexokinase small subdomain region spans residues 62–199 (NGTEEGLFYA…GLDMRVSALI (138 aa)). ADP-binding residues include glycine 76, threonine 77, and asparagine 78. Positions 165, 166, 200, and 201 each coordinate D-glucose. The interval 200–445 (NDTVGTLAAG…KSVAVKLAND (246 aa)) is hexokinase large subdomain. Threonine 224 provides a ligand contact to ADP. The D-glucose site is built by asparagine 227, glutamate 255, and glutamate 286. Glycine 410 is a binding site for ADP.

The protein belongs to the hexokinase family. In terms of tissue distribution, expressed in roots, leaves, flowers, immature seeds and seed coat.

The protein localises to the cytoplasm. It catalyses the reaction a D-hexose + ATP = a D-hexose 6-phosphate + ADP + H(+). It carries out the reaction D-fructose + ATP = D-fructose 6-phosphate + ADP + H(+). The catalysed reaction is D-glucose + ATP = D-glucose 6-phosphate + ADP + H(+). Its pathway is carbohydrate metabolism; hexose metabolism. The protein operates within carbohydrate degradation; glycolysis; D-glyceraldehyde 3-phosphate and glycerone phosphate from D-glucose: step 1/4. Fructose and glucose phosphorylating enzyme. Functions in sugar signaling via a glycolysis-dependent manner under aerobic conditions, but its signaling role is suppressed when oxygen is deficient. This is Hexokinase-7 (HXK7) from Oryza sativa subsp. japonica (Rice).